We begin with the raw amino-acid sequence, 134 residues long: Mediator of RNA polymerase II transcription subunit 10 (134 aa).

Belongs to the Mediator complex subunit 10 family. As to quaternary structure, component of the Mediator complex.

The protein resides in the nucleus. In terms of biological role, component of the Mediator complex, a coactivator involved in the regulated transcription of nearly all RNA polymerase II-dependent genes. Mediator functions as a bridge to convey information from gene-specific regulatory proteins to the basal RNA polymerase II transcription machinery. Mediator is recruited to promoters by direct interactions with regulatory proteins and serves as a scaffold for the assembly of a functional preinitiation complex with RNA polymerase II and the general transcription factors. Negatively regulates the Wnt signaling pathway and positively regulates the Nodal signaling pathway. Required for cardiac cushion formation. The sequence is that of Mediator of RNA polymerase II transcription subunit 10 (med10) from Danio rerio (Zebrafish).